The primary structure comprises 473 residues: UDP-N-acetylmuramate--L-alanine ligase (473 aa).

114–120 provides a ligand contact to ATP; that stretch reads GTHGKTT.

This sequence belongs to the MurCDEF family.

The protein localises to the cytoplasm. It carries out the reaction UDP-N-acetyl-alpha-D-muramate + L-alanine + ATP = UDP-N-acetyl-alpha-D-muramoyl-L-alanine + ADP + phosphate + H(+). It participates in cell wall biogenesis; peptidoglycan biosynthesis. Its function is as follows. Cell wall formation. This chain is UDP-N-acetylmuramate--L-alanine ligase, found in Chlorobium luteolum (strain DSM 273 / BCRC 81028 / 2530) (Pelodictyon luteolum).